The chain runs to 170 residues: Inner membrane protein p22 (170 aa).

The Intravirion segment spans residues 1 to 3 (MST). Residues 4 to 24 (LLIALIALIVLLIIILVVFLY) form a helical membrane-spanning segment. The Virion surface portion of the chain corresponds to 25 to 170 (YKKQQPPKKV…LYLPRNHKYA (146 aa)).

This sequence belongs to the asfivirus inner membrane protein p22 family.

The protein localises to the virion membrane. It localises to the host cell membrane. The protein is Inner membrane protein p22 of Ornithodoros (relapsing fever ticks).